A 1032-amino-acid chain; its full sequence is Protein phosphatase 1 regulatory subunit 12A (1032 aa).

The KVKF motif signature appears at 35-38 (KVKF). ANK repeat units lie at residues 39–68 (DDGA…DINY), 72–101 (DGLT…NINQ), 105–134 (EGWI…HVGA), 138–164 (EGDT…RQGV), 198–227 (SGGT…DVNI), and 231–260 (DGWT…DMET). Residues asparagine 67 and asparagine 100 each carry the (3S)-3-hydroxyasparagine; by HIF1AN modification. Residue asparagine 226 is modified to (3S)-3-hydroxyasparagine; by HIF1AN. Disordered regions lie at residues 290–553 (LHSE…HRSC) and 588–928 (SSTS…RLEK). Basic and acidic residues predominate over residues 291 to 300 (HSEKRDKKSP). Serine 299 bears the Phosphoserine mark. The segment covering 302-316 (IESTANMENNQPQKT) has biased composition (polar residues). The segment covering 318–340 (KNKETLIIEPEKNASRIESLEQE) has biased composition (basic and acidic residues). Residues 357-369 (SEEDEEDDSESEA) are compositionally biased toward acidic residues. The span at 383–399 (AHTASTQAAPAAVTTPT) shows a compositional bias: low complexity. Residues 400–421 (LSSNQGTPTSPVKKFPTSTTKI) show a composition bias toward polar residues. Phosphoserine is present on residues serine 422 and serine 432. Residues 422 to 432 (SPKEEERKDES) are compositionally biased toward basic and acidic residues. At threonine 443 the chain carries Phosphothreonine. Serine 445 bears the Phosphoserine mark. Tyrosine 446 carries the post-translational modification Phosphotyrosine. Residues 469–480 (RSASSPRLSSSL) show a composition bias toward low complexity. Serine 472 carries the phosphoserine; by NUAK1 modification. Serine 473 is modified (phosphoserine; by CDK1). Serine 477 is subject to Phosphoserine. Over residues 481–491 (DNKEKEKDNKG) the composition is skewed to basic and acidic residues. Serine 507 and serine 509 each carry phosphoserine. Residues 540–551 (NSSINEGSTYHR) are compositionally biased toward polar residues. Serine 601 is subject to Phosphoserine. Residues 602-612 (PAGTQSSTSNR) are compositionally biased toward polar residues. A compositionally biased stretch (basic and acidic residues) spans 614–625 (WAEDSTEKEKDS). Serine 618 bears the Phosphoserine mark. Positions 633 to 661 (LVAPTVVSAAASSTTALTTTTAGTLSSTS) are enriched in low complexity. Over residues 674–683 (VRDEESESQR) the composition is skewed to basic and acidic residues. Residues 683 to 866 (RKARSRQARQ…VSFWTQDSDE (184 aa)) are interaction with ROCK2. Over residues 684-694 (KARSRQARQSR) the composition is skewed to basic residues. Phosphoserine; by PKA and PKG; in vitro occurs at positions 693 and 696. Threonine 697 bears the Phosphothreonine; by ROCK1, ROCK2, CDC42BP, ZIPK/DAPK3 and RAF1 mark. Basic and acidic residues predominate over residues 719–768 (RTREQENEEKDKEEKEKQDKEKQEEKKESEVSREDEYKQKYSRTYDETYA). Positions 774-797 (STSSSSTPSSSSLSTLGSSLYASS) are enriched in low complexity. Over residues 798-812 (QLNRPNSLVGITSAY) the composition is skewed to polar residues. Serine 804 is modified (phosphoserine). Positions 816 to 842 (LTKDNEREGEKKEEEKEGEDKSQPKSI) are enriched in basic and acidic residues. The segment covering 843–854 (RERRRPREKRRS) has biased composition (basic residues). Phosphoserine; by ROCK2 is present on serine 854. 2 positions are modified to phosphoserine: serine 864 and serine 873. Over residues 869–885 (QERQSDTEDGSSKRDTQ) the composition is skewed to basic and acidic residues. Residues 886-900 (TDSVSRYDSSSTSSS) show a composition bias toward low complexity. Phosphoserine occurs at positions 905 and 910. Serine 912 bears the Phosphoserine; by NUAK1 mark. Basic and acidic residues predominate over residues 916 to 928 (LEERKPYGSRLEK). At serine 997 the chain carries Phosphoserine.

In terms of assembly, PP1 comprises a catalytic subunit, PPP1CA, PPP1CB or PPP1CC, and one or several targeting or regulatory subunits. PPP1R12A mediates binding to myosin. Interacts with ARHA and CIT. Binds PPP1R12B, ROCK1 and IL16. Interacts directly with PRKG1. Non-covalent dimer of 2 dimers; PRKG1-PRKG1 and PPP1R12A-PPP1R12A. Interacts with SMTNL1. Interacts with PPP1CB; the interaction is direct. Interacts (when phosphorylated at Ser-445, Ser-472 and Ser-910) with 14-3-3. Interacts with ROCK1 and ROCK2. Interacts with isoform 1 and isoform 2 of ZIPK/DAPK3. Interacts with RAF1. Interacts with HIF1AN. Interacts with NCKAP1L. In terms of processing, phosphorylated on upon DNA damage, probably by ATM or ATR. Phosphorylated by CIT (Rho-associated kinase). Phosphorylated cooperatively by ROCK1 and CDC42BP on Thr-697. In vitro, phosphorylation of Ser-696 by PKA and PKG appears to prevent phosphorylation of the inhibitory site Thr-697, probably mediated by PRKG1. May be phosphorylated at Thr-697 by DMPK; may inhibit the myosin phosphatase activity. Phosphorylated at Ser-473 by CDK1 during mitosis, creating docking sites for the POLO box domains of PLK1. Subsequently, PLK1 binds and phosphorylates PPP1R12A. As to expression, smooth muscle. Detected in aorta, portal vein, stomach, intestine, bladder and lung.

Its subcellular location is the cytoplasm. The protein localises to the cytoskeleton. It is found in the stress fiber. Key regulator of protein phosphatase 1C (PPP1C). Mediates binding to myosin. As part of the PPP1C complex, involved in dephosphorylation of PLK1. Capable of inhibiting HIF1AN-dependent suppression of HIF1A activity. In Rattus norvegicus (Rat), this protein is Protein phosphatase 1 regulatory subunit 12A.